The sequence spans 302 residues: Serine/threonine-protein phosphatase alpha-3 isoform (302 aa).

Residues D62, H64, D90, and N122 each contribute to the Mn(2+) site. Catalysis depends on H123, which acts as the Proton donor. 2 residues coordinate Mn(2+): H171 and H246.

Belongs to the PPP phosphatase family. PP-1 subfamily. Interacts with Nop17l. Mn(2+) is required as a cofactor.

It catalyses the reaction O-phospho-L-seryl-[protein] + H2O = L-seryl-[protein] + phosphate. It carries out the reaction O-phospho-L-threonyl-[protein] + H2O = L-threonyl-[protein] + phosphate. The polypeptide is Serine/threonine-protein phosphatase alpha-3 isoform (Pp1-13C) (Drosophila melanogaster (Fruit fly)).